A 412-amino-acid polypeptide reads, in one-letter code: Alpha-1-antiproteinase (412 aa).

Positions 1-24 are cleaved as a signal peptide; the sequence is MPSSISWGLLLLAGLCCLAPGSLA. Ser33 carries the phosphoserine modification. N-linked (GlcNAc...) asparagine glycans are attached at residues Asn65, Asn102, Asn165, and Asn266. Positions 368–387 are RCL; that stretch reads GVTVLEAIPMSLPPDVRFDR. Phosphoserine is present on Ser378.

This sequence belongs to the serpin family. As to quaternary structure, interacts with CELA2A. Interacts with ERGIC3 and LMAN1/ERGIC53. Interacts with PRSS1/Trypsin. In terms of tissue distribution, plasma.

The protein resides in the secreted. Its function is as follows. Inhibitor of serine proteases. The polypeptide is Alpha-1-antiproteinase (Callosciurus caniceps (Gray-bellied squirrel)).